The chain runs to 197 residues: Putative WUSCHEL-related homeobox 10 (197 aa).

The homeobox; WUS-type DNA-binding region spans 75–139; sequence STRPRWTPTT…NRRARSKRKQ (65 aa). Residues 132-168 form a disordered region; the sequence is RARSKRKQPPTTTITSSQADDAAVTTTEERGRCGDDS. Positions 140–150 are enriched in polar residues; it reads PPTTTITSSQA.

It belongs to the WUS homeobox family.

The protein localises to the nucleus. Its function is as follows. Potential transcription factor that plays a central role during developmental processes. This chain is Putative WUSCHEL-related homeobox 10 (WOX10), found in Arabidopsis thaliana (Mouse-ear cress).